The following is a 301-amino-acid chain: Oxygen-dependent coproporphyrinogen-III oxidase (301 aa).

Residues 49–58 are important for dimerization; that stretch reads VMVDGAVIEK. Ser-93 contacts substrate. His-107 acts as the Proton donor in catalysis. Substrate is bound by residues 109 to 111 and 259 to 261; these read NVR and GGR. An important for dimerization region spans residues 241–276; sequence YAEFNLVIDRGTKFGLQSGGRTESILISLPPRARWG.

Belongs to the aerobic coproporphyrinogen-III oxidase family. As to quaternary structure, homodimer.

The protein localises to the cytoplasm. The enzyme catalyses coproporphyrinogen III + O2 + 2 H(+) = protoporphyrinogen IX + 2 CO2 + 2 H2O. The protein operates within porphyrin-containing compound metabolism; protoporphyrin-IX biosynthesis; protoporphyrinogen-IX from coproporphyrinogen-III (O2 route): step 1/1. Involved in the heme biosynthesis. Catalyzes the aerobic oxidative decarboxylation of propionate groups of rings A and B of coproporphyrinogen-III to yield the vinyl groups in protoporphyrinogen-IX. This Leishmania major protein is Oxygen-dependent coproporphyrinogen-III oxidase.